Reading from the N-terminus, the 396-residue chain is Anticodon nuclease (396 aa).

Anticodon endonuclease (ACNase) that triggers the cleavage ligation of tRNA(Lys). It is activated by T4 stp protein and masked by the prrD protein (the endonuclease subunit of EcoprrI). The prr locus restricts phage T4 mutants lacking polynucleotide kinase or RNA ligase; T4 mutants lacking these genes manifest a T4-induced anticodon nuclease (ACNase). It is thought that Stp and other T4-encoded ACNase factors counteract the masking agents, thus activating the latent ACNase. The sequence is that of Anticodon nuclease from Escherichia coli.